The following is a 145-amino-acid chain: uncharacterized protein (145 aa).

Residues 46–66 traverse the membrane as a helical segment; it reads FFFLFFLFFFFFFTFQFLVAF.

The protein localises to the membrane. This is an uncharacterized protein from Saccharomyces cerevisiae (strain ATCC 204508 / S288c) (Baker's yeast).